The primary structure comprises 367 residues: Peptide chain release factor 2 (367 aa).

Gln-254 carries the post-translational modification N5-methylglutamine.

It belongs to the prokaryotic/mitochondrial release factor family. Post-translationally, methylated by PrmC. Methylation increases the termination efficiency of RF2.

Its subcellular location is the cytoplasm. In terms of biological role, peptide chain release factor 2 directs the termination of translation in response to the peptide chain termination codons UGA and UAA. The chain is Peptide chain release factor 2 from Leptospira interrogans serogroup Icterohaemorrhagiae serovar copenhageni (strain Fiocruz L1-130).